We begin with the raw amino-acid sequence, 106 residues long: ATP-dependent Clp protease adapter protein ClpS (106 aa).

The protein belongs to the ClpS family. Binds to the N-terminal domain of the chaperone ClpA.

Its function is as follows. Involved in the modulation of the specificity of the ClpAP-mediated ATP-dependent protein degradation. In Nocardia farcinica (strain IFM 10152), this protein is ATP-dependent Clp protease adapter protein ClpS.